The sequence spans 340 residues: Phosphoribosylformylglycinamidine cyclo-ligase (340 aa).

It belongs to the AIR synthase family.

It localises to the cytoplasm. It catalyses the reaction 2-formamido-N(1)-(5-O-phospho-beta-D-ribosyl)acetamidine + ATP = 5-amino-1-(5-phospho-beta-D-ribosyl)imidazole + ADP + phosphate + H(+). The protein operates within purine metabolism; IMP biosynthesis via de novo pathway; 5-amino-1-(5-phospho-D-ribosyl)imidazole from N(2)-formyl-N(1)-(5-phospho-D-ribosyl)glycinamide: step 2/2. This Streptococcus agalactiae serotype III (strain NEM316) protein is Phosphoribosylformylglycinamidine cyclo-ligase.